The following is a 394-amino-acid chain: Elongation factor Tu (394 aa).

Residues 10-204 (KPHVNIGTIG…AVDSYIPQPV (195 aa)) form the tr-type G domain. Residues 19 to 26 (GHVDHGKT) form a G1 region. 19-26 (GHVDHGKT) serves as a coordination point for GTP. Position 26 (Thr26) interacts with Mg(2+). Residues 60–64 (GITIS) form a G2 region. Positions 81–84 (DCPG) are G3. Residues 81–85 (DCPGH) and 136–139 (NKVD) contribute to the GTP site. The tract at residues 136–139 (NKVD) is G4. Residues 174–176 (SAL) are G5.

The protein belongs to the TRAFAC class translation factor GTPase superfamily. Classic translation factor GTPase family. EF-Tu/EF-1A subfamily. Monomer.

The protein resides in the cytoplasm. The enzyme catalyses GTP + H2O = GDP + phosphate + H(+). In terms of biological role, GTP hydrolase that promotes the GTP-dependent binding of aminoacyl-tRNA to the A-site of ribosomes during protein biosynthesis. This Rickettsia canadensis (strain McKiel) protein is Elongation factor Tu.